The sequence spans 446 residues: Cobalamin biosynthesis protein CbiHC (446 aa).

Residues 1 to 246 (MLLLPSRGKL…MFTPRGYSNK (246 aa)) are cobalt-factor III C(17)-methyltransferase. The segment at 247-446 (YNIGEKRRAE…CLIEHADRPD (200 aa)) is cobalt-precorrin-8 methylmutase.

This sequence in the N-terminal section; belongs to the precorrin methyltransferase family. The protein in the C-terminal section; belongs to the CobH family.

The catalysed reaction is Co(II)-factor III + S-adenosyl-L-methionine + H(+) = Co(II)-factor IV + S-adenosyl-L-homocysteine. It catalyses the reaction Co-precorrin-8X = cob(II)yrinate. Its pathway is cofactor biosynthesis; adenosylcobalamin biosynthesis; cob(II)yrinate a,c-diamide from sirohydrochlorin (anaerobic route): step 3/10. It participates in cofactor biosynthesis; adenosylcobalamin biosynthesis; cob(II)yrinate a,c-diamide from sirohydrochlorin (anaerobic route): step 9/10. Bifunctional enzyme with a methyltransferase domain that catalyzes the ring contraction and methylation of C-17 in cobalt-factor III to form cobalt-factor IV, and an isomerase domain that catalyzes the conversion of cobalt-precorrin-8 to cobyrinate. The sequence is that of Cobalamin biosynthesis protein CbiHC (cbiHC) from Archaeoglobus fulgidus (strain ATCC 49558 / DSM 4304 / JCM 9628 / NBRC 100126 / VC-16).